We begin with the raw amino-acid sequence, 336 residues long: Succinylglutamate desuccinylase (336 aa).

Zn(2+)-binding residues include H59, E62, and H151. E215 is an active-site residue.

It belongs to the AspA/AstE family. Succinylglutamate desuccinylase subfamily. Requires Zn(2+) as cofactor.

The enzyme catalyses N-succinyl-L-glutamate + H2O = L-glutamate + succinate. Its pathway is amino-acid degradation; L-arginine degradation via AST pathway; L-glutamate and succinate from L-arginine: step 5/5. Its function is as follows. Transforms N(2)-succinylglutamate into succinate and glutamate. This is Succinylglutamate desuccinylase from Pseudomonas fluorescens (strain ATCC BAA-477 / NRRL B-23932 / Pf-5).